Reading from the N-terminus, the 927-residue chain is MTIGITGPERKAPRQSAVVGLIIAALVIAIVLTLLALASDFLVDWLWFSVIGYREVFWTTIGAKAVVFLAVWTATAVILLLNGWLALHFARRRSTQLAAASVWSAAGNAPPDLLALVRDRLRWPRLIAAGAASLALLVAAAEAGNWGVFLQFVYQAPYGADDPLYNNDIGFYLFSLPAYILIKNWMMLALALSALFAAAIYLVHGEIEYDIHRRSMSSTVIAHGSALLGLLFAVKAWSFGLDRYLLLYGDNGVVVGASYTDVHVGLPALWLMIGLSGIAALAAWANVRVRTYRLPAAAFLLVAIGSFVLSGLVPVLFRQFFVRPSELELERPYIERNIALTRQAYNLDQIAAKPFAAEQKLSFKTLDANKATIDNIRLWDWQPLADTYAQLQEIRTYYKFHHLDVDRYWLNGSYQSVMISARELRPSLLPPNAQTWVNHHVLFTHGTGAVMSPVTRKSSEGLPFLYLRDIPPVADGGPQIREPRIYYGEEHDSYVIVKGSTPEFDYPKGKDNVYAAYDGTGGVPIGAAVWRGLFAYYFNDPNLLLSSYITADSRIMIRRNIGERVRTIAPFLRLDHDPYLVISNGRMFWMQDAYTVSSYFPSAQPAQDQDLNYIRNSVKVIVDAYNGTVDFYLMDTGDPVAATWRRIFPNLFKPFSVMPADLQRHIRYPEDLFLIQAQLYQSYHMEAADVFYNREDLWQFPRQPGGGGVATMAPYYIIMRLPGESQAEFFLMLPMVPSRRDNMIAWLAARCDAPDYGKLIVYEFPKEKLVYGPFQIEARINQSTEISQQITLWNQMGSRVIRGANLLVIPIENSILYVTPLYLRAEHGHLPELKRVIAAYGEHVVMKETLDEALSALFTEPGAVRPVSSTMEEMPVTRPSASQAREALDRYNQAVERLRSGDWKGFGTQFDAMRELLEDMNRHSADR.

7 helical membrane passes run 17–37 (AVVG…LLAL), 65–85 (AVVF…NGWL), 134–154 (LALL…QFVY), 185–205 (WMML…LVHG), 220–240 (VIAH…WSFG), 264–284 (VGLP…LAAW), and 297–317 (AAFL…PVLF).

The protein belongs to the UPF0182 family.

Its subcellular location is the cell membrane. In Bradyrhizobium diazoefficiens (strain JCM 10833 / BCRC 13528 / IAM 13628 / NBRC 14792 / USDA 110), this protein is UPF0182 protein bll7333.